Consider the following 283-residue polypeptide: Spore coat polysaccharide biosynthesis protein SpsK (283 aa).

Belongs to the dTDP-4-dehydrorhamnose reductase family.

It functions in the pathway spore coat biogenesis; spore coat polysaccharide biosynthesis. The polypeptide is Spore coat polysaccharide biosynthesis protein SpsK (spsK) (Bacillus subtilis (strain 168)).